The chain runs to 762 residues: Polyadenylate-binding protein, cytoplasmic and nuclear (762 aa).

The interval 39 to 58 (TGEEIDTAGPTPSSAAPHPQ) is disordered. Low complexity predominate over residues 48 to 58 (PTPSSAAPHPQ). 4 RRM domains span residues 61–139 (ASLY…WSQR), 149–226 (GNVF…HHIP), 242–320 (TNIY…RAQK), and 346–470 (VNLY…LAQR). 3 disordered regions span residues 376 to 429 (KVMR…KSKL), 596 to 663 (SALA…AGAP), and 740 to 762 (VRQQ…EEKA). Residues 389–425 (GESKEGEESEKNKENKPEEKEGDDSKPEEKEGEDSKS) are compositionally biased toward basic and acidic residues. Residues 600–612 (GGRGGPAGRGPMQ) are compositionally biased toward gly residues. The span at 645-663 (AAGRAPAGAPAGARGAGAP) shows a compositional bias: low complexity. In terms of domain architecture, PABC spans 664-741 (EGLQGQLAAV…ALAVYDDYVR (78 aa)). The span at 753 to 762 (SKEEKTEEKA) shows a compositional bias: basic and acidic residues.

This sequence belongs to the polyadenylate-binding protein type-1 family.

The protein localises to the cytoplasm. Its subcellular location is the nucleus. In terms of biological role, binds the poly(A) tail of mRNA. Appears to be an important mediator of the multiple roles of the poly(A) tail in mRNA biogenesis, stability and translation. In the nucleus, involved in both mRNA cleavage and polyadenylation. Is also required for efficient mRNA export to the cytoplasm. Acts in concert with a poly(A)-specific nuclease (PAN) to affect poly(A) tail shortening, which may occur concomitantly with either nucleocytoplasmic mRNA transport or translational initiation. In the cytoplasm, stimulates translation initiation and regulates mRNA decay through translation termination-coupled poly(A) shortening, probably mediated by PAN. This chain is Polyadenylate-binding protein, cytoplasmic and nuclear (PAB1), found in Pyricularia oryzae (strain 70-15 / ATCC MYA-4617 / FGSC 8958) (Rice blast fungus).